The primary structure comprises 217 residues: Putative thymidylate synthase (217 aa).

The active site involves Cys-139.

The protein belongs to the thymidylate synthase family. Archaeal-type ThyA subfamily. In terms of assembly, monomer.

It is found in the cytoplasm. The protein operates within pyrimidine metabolism; dTTP biosynthesis. Its function is as follows. May catalyze the biosynthesis of dTMP using an unknown cosubstrate. This is Putative thymidylate synthase from Methanosarcina barkeri (strain Fusaro / DSM 804).